Reading from the N-terminus, the 429-residue chain is Glutamate-1-semialdehyde 2,1-aminomutase 1 (429 aa).

Position 267 is an N6-(pyridoxal phosphate)lysine (Lys267).

It belongs to the class-III pyridoxal-phosphate-dependent aminotransferase family. HemL subfamily. Homodimer. The cofactor is pyridoxal 5'-phosphate.

The protein localises to the cytoplasm. It catalyses the reaction (S)-4-amino-5-oxopentanoate = 5-aminolevulinate. The protein operates within porphyrin-containing compound metabolism; protoporphyrin-IX biosynthesis; 5-aminolevulinate from L-glutamyl-tRNA(Glu): step 2/2. This chain is Glutamate-1-semialdehyde 2,1-aminomutase 1, found in Staphylococcus carnosus (strain TM300).